The chain runs to 843 residues: Protein P (843 aa).

The terminal protein domain (TP) stretch occupies residues 1–177 (MPLSYPHFRK…FCGSPYSWEQ (177 aa)). The spacer stretch occupies residues 178-346 (ELQHGSTSIN…YCLSHIINLL (169 aa)). Disordered stretches follow at residues 202-221 (SGIL…FQQS) and 285-310 (TNPS…VPPG). The interval 347–690 (EDWGPCYEHG…YMNLYPVARQ (344 aa)) is polymerase/reverse transcriptase domain (RT). A Reverse transcriptase domain is found at 357–600 (QHHIRTPRTP…YTLNFMGYVI (244 aa)). The Mg(2+) site is built by Asp-429, Asp-551, and Asp-552.

The protein belongs to the hepadnaviridae P protein family.

The enzyme catalyses DNA(n) + a 2'-deoxyribonucleoside 5'-triphosphate = DNA(n+1) + diphosphate. It catalyses the reaction Endonucleolytic cleavage to 5'-phosphomonoester.. Its activity is regulated as follows. Activated by host HSP70 and HSP40 in vitro to be able to bind the epsilon loop of the pgRNA. Because deletion of the RNase H region renders the protein partly chaperone-independent, the chaperones may be needed indirectly to relieve occlusion of the RNA-binding site by this domain. Inhibited by several reverse-transcriptase inhibitors: Lamivudine, Adefovir and Entecavir. In terms of biological role, multifunctional enzyme that converts the viral RNA genome into dsDNA in viral cytoplasmic capsids. This enzyme displays a DNA polymerase activity that can copy either DNA or RNA templates, and a ribonuclease H (RNase H) activity that cleaves the RNA strand of RNA-DNA heteroduplexes in a partially processive 3'- to 5'-endonucleasic mode. Neo-synthesized pregenomic RNA (pgRNA) are encapsidated together with the P protein, and reverse-transcribed inside the nucleocapsid. Initiation of reverse-transcription occurs first by binding the epsilon loop on the pgRNA genome, and is initiated by protein priming, thereby the 5'-end of (-)DNA is covalently linked to P protein. Partial (+)DNA is synthesized from the (-)DNA template and generates the relaxed circular DNA (RC-DNA) genome. After budding and infection, the RC-DNA migrates in the nucleus, and is converted into a plasmid-like covalently closed circular DNA (cccDNA). The activity of P protein does not seem to be necessary for cccDNA generation, and is presumably released from (+)DNA by host nuclear DNA repair machinery. This is Protein P from Hepatitis B virus genotype F1 (isolate Argentina/sa11/2000) (HBV-F).